The sequence spans 241 residues: MPAARAAPAADEPMRDPVAPVRAPALPRPAPGAVAPASGGARAPGLAAPVEAMTEYKLVVVGARGVGKSALTIQLIQNHFVDEYDPTIEDSYRKQVVIDGETCLLDILDTTGQEEYSAMRDQYMRTGEGFLCVFAINNTKSFEDIHQYREQIKRVKDSDDVPMVLVGNKCDLAGRTVESRQAQDLARSYGIPYIETSAKTRQGVEDAFYTLVREIRQHKLRKLNPPDESGPGCMSCKCVLS.

The interval 1-41 (MPAARAAPAADEPMRDPVAPVRAPALPRPAPGAVAPASGGA) is disordered. S-palmitoyl cysteine; by host attachment occurs at residues cysteine 233 and cysteine 236. Cysteine 238 is modified (cysteine methyl ester; by host). Cysteine 238 carries S-farnesyl cysteine; by host lipidation. The propeptide at 239-241 (VLS) is removed in mature form.

This sequence belongs to the small GTPase superfamily. Ras family.

The protein resides in the host cell membrane. It carries out the reaction GTP + H2O = GDP + phosphate + H(+). With respect to regulation, alternates between an inactive form bound to GDP and an active form bound to GTP. Activated by a guanine nucleotide-exchange factor (GEF) and inactivated by a GTPase-activating protein (GAP). The chain is Transforming protein p29 (H-RAS) from Mus musculus (Mouse).